We begin with the raw amino-acid sequence, 431 residues long: Putative serine/threonine-protein kinase A (431 aa).

A Protein kinase domain is found at 20–279 (YLNKGIVGLG…VREIFQIPYI (260 aa)). ATP contacts are provided by residues 26 to 34 (VGLGSYGEA) and Lys-49. Asp-147 functions as the Proton acceptor in the catalytic mechanism. Residues 331-429 (DVTHRGHVNK…WVHAIQRGIG (99 aa)) form the PH domain.

This sequence belongs to the protein kinase superfamily. Ser/Thr protein kinase family.

The enzyme catalyses L-seryl-[protein] + ATP = O-phospho-L-seryl-[protein] + ADP + H(+). The catalysed reaction is L-threonyl-[protein] + ATP = O-phospho-L-threonyl-[protein] + ADP + H(+). The sequence is that of Putative serine/threonine-protein kinase A (NRKA) from Trypanosoma brucei brucei.